The primary structure comprises 486 residues: MIQGTTSDAGKSTLVAGLCRLARRTGARVAPFKPQNMALNSAVTANGGEIGRAQALQALAAGIEAHTDLNPVLLKPTGDRGAQVIIHGTARANLDARAYHDYKPTAMRAVLESYGRLRGAYDAVIVEGAGSPAEINLREGDIANMGFAEAVDCPVVLVADIDRGGVFAHLVGTLACLSDSERARVRGFVINRFRGDPALLEPGLRWLEARTGKPVLGVLPYLHGLTLDAEDMLPASARTSAARRDAGVLRIVVPALPRISNHTDFDALRAHPRVDFTYWKRGPVPDADLLILPGSKNVLADLAWLRDAGWDALIKRHLRYGGKVIGICGGMQMLGRTLADPHGVEGAAGATSAGLGLLDYATTLTPEKTLVNAAGRLAFGGDARVAGYEIHMGRTEGPALASPALMLAGRGGERPDGAVSADGQILATYLHGLFDTPHACAALLEWAGLDGAEALDYPALREASLERLADTFAEHLDLDRVFAAFA.

Residues 248 to 439 form the GATase cobBQ-type domain; the sequence is VLRIVVPALP…LHGLFDTPHA (192 aa). Cys-328 acts as the Nucleophile in catalysis. The active site involves His-431.

It belongs to the CobB/CobQ family. CobQ subfamily.

Its pathway is cofactor biosynthesis; adenosylcobalamin biosynthesis. Catalyzes amidations at positions B, D, E, and G on adenosylcobyrinic A,C-diamide. NH(2) groups are provided by glutamine, and one molecule of ATP is hydrogenolyzed for each amidation. The sequence is that of Cobyric acid synthase from Burkholderia mallei (strain ATCC 23344).